Consider the following 513-residue polypeptide: Histone acetyltransferase KAT5 (513 aa).

The Tudor-knot domain occupies 8–65 (IEGCRLPVLRRNQDNEDEWPLAEILSVKDISGRKLFYVHYIDFNKRLDEWVTHERLDL). Position 52 is an N6-acetyllysine (Lys-52). Residues 69–106 (QFPKKEAKTPTKNGLPGSRPGSPEREVPASAQASGKTL) are disordered. Position 86 is a phosphoserine; by GSK3 (Ser-86). Phosphoserine; by CDK1 and CDK9 is present on Ser-90. 2 positions are modified to N6-acetyllysine; by autocatalysis: Lys-104 and Lys-120. The disordered stretch occupies residues 122–220 (REAIPGGEPD…RMTGSLVSDR (99 aa)). The segment covering 133–144 (PLSSSSCLQPNH) has biased composition (polar residues). Lys-148, Lys-150, Lys-187, and Lys-189 each carry N6-acetyllysine; by autocatalysis. Ser-199 is modified (phosphoserine). The region spanning 227 to 504 (TRMKNIECIE…IDSKCLHFTP (278 aa)) is the MYST-type HAT domain. The C2HC MYST-type zinc finger occupies 260-285 (LYLCEFCLKYGRSLKCLQRHLTKCDL). Lys-327 is modified (N6-acetyllysine; by autocatalysis). The interval 368 to 513 (ACILTLPPYQ…PKDWSKRGKW (146 aa)) is interaction with ATF2. Residues 370-372 (ILT) and 377-383 (QRRGYGK) contribute to the acetyl-CoA site. Glu-403 (proton donor/acceptor) is an active-site residue. Residues Ser-407 and Ser-416 each coordinate acetyl-CoA. Lys-430 is covalently cross-linked (Glycyl lysine isopeptide (Lys-Gly) (interchain with G-Cter in SUMO1); alternate). Lys-430 is covalently cross-linked (Glycyl lysine isopeptide (Lys-Gly) (interchain with G-Cter in SUMO2); alternate). Lys-451 is covalently cross-linked (Glycyl lysine isopeptide (Lys-Gly) (interchain with G-Cter in SUMO1)).

Belongs to the MYST (SAS/MOZ) family. In terms of assembly, component of the NuA4 histone acetyltransferase complex which contains the catalytic subunit KAT5/TIP60 and the subunits EP400, TRRAP/PAF400, BRD8/SMAP, EPC1, DMAP1/DNMAP1, RUVBL1/TIP49, RUVBL2, ING3, actin, ACTL6A/BAF53A, MORF4L1/MRG15, MORF4L2/MRGX, MRGBP, YEATS4/GAS41, VPS72/YL1 and MEAF6. KAT5/TIP60, EPC1, and ING3 together constitute a minimal HAT complex termed Piccolo NuA4. The NuA4 complex interacts with MYC. Interacts with ATM. Interacts with JADE1. Interacts with PLA2G4A/CPLA2, EDNRA and HDAC7. Interacts with the cytoplasmic tail of APP and APBB1/FE65. Interacts with TRIM24 and TRIM68. Forms a complex with SENP6 and UBE2I in response to UV irradiation. Identified in a complex with HINT1. Interacts with ATF2 and CUL3. Interacts with NR1D2 (via N-terminus). Component of a SWR1-like complex. Interacts with FOXP3. Interacts with ZBTB49. Interacts with SRF. Interacts with ATF3; promoting autoacetylation and deubiquitination by USP7. Interacts with EP300/p300; interaction promotes KAT5 autoacetylation. Interacts with PRKDC; interaction is impaired following KAT5 sumoylation. Interacts with GPR50. Interacts with NME3; this interaction enables recruitment of NME3 at DNA damage sites where it plays a role in the repair of DNA. As to quaternary structure, (Microbial infection) Interacts with HIV-1 TAT. Post-translationally, phosphorylated on Ser-86 and Ser-90; enhanced during G2/M phase. The phosphorylated form has a higher activity. Phosphorylation at Ser-90 by CDK1 or CDK9 is a prerequisite for phosphorylation at Ser-86 by GSK3. Phosphorylation at Ser-86 by GSK3 (GSK3A or GSK3B) activates acetyltransferase and acyltransferase activities. Phosphorylation at Ser-90 by CDK9 promotes KAT5 recruitment to chromatin. Phosphorylation by VRK1 following DNA damage promotes KAT5 association with chromatin and histone acetyltransferase activity. In terms of processing, autoacetylated. Autoacetylation is required for histone acetyltransferase activity. Autoacetylation at Lys-327 is facilitated by interaction with EP300/p300: it prevents ubiquitination and subsequent degradation by the proteasome and promotes acetylation of target proteins. Deacetylated by HDAC3 and SIRT1. Deacetylation by HDAC3 promotes its ubiquitination and cytoplasmic localization. Sumoylated by UBE2I at Lys-430 and Lys-451, leading to increase of its histone acetyltransferase activity in UV-induced DNA damage response, as well as its translocation to nuclear bodies. Sumoylation with SUMO2 by PIAS4 at Lys-430 promotes repair of DNA double-strand breaks (DSBs) via homologous recombination (HR). Sumoylation by PIAS4 impairs interaction with PRKDC, inhibiting non-homologous end joining (NHEJ)-mediated repair of DSBs, thereby facilitating HR. Desumoylated by SENP3. Post-translationally, ubiquitinated by MDM2, leading to its proteasome-dependent degradation. Ubiquitination is prevented by autoacetylation at Lys-327. Ubiquitinated following deacetylation by HDAC3, leading to cytoplasmic localization. Deubiquitinated by USP7 following interaction with ATF3, promoting its stabilization. In terms of processing, (Microbial infection) In case of HIV-1 infection, interaction with the viral Tat protein leads to KAT5 polyubiquitination and targets it to degradation.

It localises to the nucleus. It is found in the chromosome. The protein localises to the cytoplasm. The protein resides in the centromere. Its subcellular location is the kinetochore. It localises to the cytoskeleton. It is found in the spindle pole. The protein localises to the nucleolus. The protein resides in the perinuclear region. It carries out the reaction L-lysyl-[histone] + acetyl-CoA = N(6)-acetyl-L-lysyl-[histone] + CoA + H(+). It catalyses the reaction L-lysyl-[protein] + acetyl-CoA = N(6)-acetyl-L-lysyl-[protein] + CoA + H(+). The catalysed reaction is (2E)-butenoyl-CoA + L-lysyl-[protein] = N(6)-(2E)-butenoyl-L-lysyl-[protein] + CoA + H(+). The enzyme catalyses 2-hydroxyisobutanoyl-CoA + L-lysyl-[protein] = N(6)-(2-hydroxyisobutanoyl)-L-lysyl-[protein] + CoA + H(+). It carries out the reaction (S)-lactoyl-CoA + L-lysyl-[protein] = N(6)-[(S)-lactoyl]-L-lysyl-[protein] + CoA + H(+). Acyltransferase and acetyltransferase activities are activated by phosphorylation and autoacetylation. Autoacetylation activates the histone acetyltransferase activity. Catalytic subunit of the NuA4 histone acetyltransferase complex, a multiprotein complex involved in transcriptional activation of select genes principally by acetylation of nucleosomal histones H2A and H4. Histone acetylation alters nucleosome-DNA interactions and promotes interaction of the modified histones with other proteins which positively regulate transcription. The NuA4 histone acetyltransferase complex is required for the activation of transcriptional programs associated with proto-oncogene mediated growth induction, tumor suppressor mediated growth arrest and replicative senescence, apoptosis, and DNA repair. The NuA4 complex plays a direct role in repair of DNA double-strand breaks (DSBs) by promoting homologous recombination (HR): the complex inhibits TP53BP1 binding to chromatin via MBTD1, which recognizes and binds histone H4 trimethylated at 'Lys-20' (H4K20me), and KAT5 that catalyzes acetylation of 'Lys-15' of histone H2A (H2AK15ac), thereby blocking the ubiquitination mark required for TP53BP1 localization at DNA breaks. Also involved in DSB repair by mediating acetylation of 'Lys-5' of histone H2AX (H2AXK5ac), promoting NBN/NBS1 assembly at the sites of DNA damage. The NuA4 complex plays a key role in hematopoietic stem cell maintenance and is required to maintain acetylated H2A.Z/H2AZ1 at MYC target genes. The NuA4 complex is also required for spermatid development by promoting acetylation of histones: histone hyperacetylation is required for histone replacement during the transition from round to elongating spermatids. Component of a SWR1-like complex that specifically mediates the removal of histone H2A.Z/H2AZ1 from the nucleosome. Also acetylates non-histone proteins, such as BMAL1, ATM, AURKB, CHKA, CGAS, ERCC4/XPF, LPIN1, TP53/p53, NDC80/HEC1, NR1D2, RAN, SOX4, FOXP3, SQSTM1, ULK1 and RUBCNL/Pacer. Directly acetylates and activates ATM. Promotes nucleotide excision repair (NER) by mediating acetylation of ERCC4/XPF, thereby promoting formation of the ERCC4-ERCC1 complex. Relieves NR1D2-mediated inhibition of APOC3 expression by acetylating NR1D2. Acts as a regulator of regulatory T-cells (Treg) by catalyzing FOXP3 acetylation, thereby promoting FOXP3 transcriptional repressor activity. Involved in skeletal myoblast differentiation by mediating acetylation of SOX4. Catalyzes acetylation of APBB1/FE65, increasing its transcription activator activity. Promotes transcription elongation during the activation phase of the circadian cycle by catalyzing acetylation of BMAL1, promoting elongation of circadian transcripts. Together with GSK3 (GSK3A or GSK3B), acts as a regulator of autophagy: phosphorylated at Ser-86 by GSK3 under starvation conditions, leading to activate acetyltransferase activity and promote acetylation of key autophagy regulators, such as ULK1 and RUBCNL/Pacer. Acts as a regulator of the cGAS-STING innate antiviral response by catalyzing acetylation the N-terminus of CGAS, thereby promoting CGAS DNA-binding and activation. Also regulates lipid metabolism by mediating acetylation of CHKA or LPIN1. Promotes lipolysis of lipid droplets following glucose deprivation by mediating acetylation of isoform 1 of CHKA, thereby promoting monomerization of CHKA and its conversion into a tyrosine-protein kinase. Acts as a regulator of fatty-acid-induced triacylglycerol synthesis by catalyzing acetylation of LPIN1, thereby promoting the synthesis of diacylglycerol. In addition to protein acetyltransferase, can use different acyl-CoA substrates, such as (2E)-butenoyl-CoA (crotonyl-CoA), S-lactoyl-CoA (lactyl-CoA) and 2-hydroxyisobutanoyl-CoA (2-hydroxyisobutyryl-CoA), and is able to mediate protein crotonylation, lactylation and 2-hydroxyisobutyrylation, respectively. Acts as a key regulator of chromosome segregation and kinetochore-microtubule attachment during mitosis by mediating acetylation or crotonylation of target proteins. Catalyzes acetylation of AURKB at kinetochores, increasing AURKB activity and promoting accurate chromosome segregation in mitosis. Acetylates RAN during mitosis, promoting microtubule assembly at mitotic chromosomes. Acetylates NDC80/HEC1 during mitosis, promoting robust kinetochore-microtubule attachment. Catalyzes crotonylation of MAPRE1/EB1, thereby ensuring accurate spindle positioning in mitosis. Catalyzes lactylation of NBN/NBS1 in response to DNA damage, thereby promoting DNA double-strand breaks (DSBs) via homologous recombination (HR). Its function is as follows. (Microbial infection) Catalyzes the acetylation of flavivirus NS3 protein to modulate their RNA-binding and -unwinding activities leading to facilitate viral replication. The protein is Histone acetyltransferase KAT5 of Homo sapiens (Human).